The chain runs to 319 residues: Ribonuclease Z (319 aa).

His62, His64, Asp66, His67, His139, Asp209, and His268 together coordinate Zn(2+). The active-site Proton acceptor is the Asp66.

The protein belongs to the RNase Z family. As to quaternary structure, homodimer. The cofactor is Zn(2+).

The catalysed reaction is Endonucleolytic cleavage of RNA, removing extra 3' nucleotides from tRNA precursor, generating 3' termini of tRNAs. A 3'-hydroxy group is left at the tRNA terminus and a 5'-phosphoryl group is left at the trailer molecule.. Functionally, zinc phosphodiesterase, which displays some tRNA 3'-processing endonuclease activity. Probably involved in tRNA maturation, by removing a 3'-trailer from precursor tRNA. This chain is Ribonuclease Z, found in Pseudomonas putida (strain GB-1).